A 509-amino-acid chain; its full sequence is Protein disulfide-isomerase (509 aa).

Residues 1-18 (MLRRAVLCLALAVTAGWA) form the signal peptide. The region spanning 19 to 135 (WAAEEEDNVL…IVNWLKKRTG (117 aa)) is the Thioredoxin 1 domain. Residues Cys54 and Cys57 each act as nucleophile in the active site. Residues Cys54 and Cys57 are joined by a disulfide bond. Lys223 and Lys272 each carry N6-succinyllysine. Ser332 and Ser358 each carry phosphoserine. In terms of domain architecture, Thioredoxin 2 spans 347–476 (FLEGKIKPHL…FKKFLESGGQ (130 aa)). Residues Cys398 and Cys401 each act as nucleophile in the active site. Cys398 and Cys401 are joined by a disulfide. Ser428 carries the post-translational modification Phosphoserine. Positions 471 to 509 (LESGGQDGAGDEDGLEDLEEAEEPDLEEDDDQKAVRDEL) are disordered. Residues 479-501 (AGDEDGLEDLEEAEEPDLEEDDD) are compositionally biased toward acidic residues. Residues 506 to 509 (RDEL) carry the Prevents secretion from ER motif.

Belongs to the protein disulfide isomerase family. In terms of assembly, heterodimer; heterodimerizes with the protein microsomal triglyceride transfer MTTP. Homodimer. Monomers and homotetramers may also occur. Interacts with P4HA2, forming a heterotetramer consisting of 2 alpha subunits (P4HA2) and 2 beta (P4HB), where P4HB plays the role of a structural subunit; this tetramer catalyzes the formation of 4-hydroxyproline in collagen. Also constitutes the structural subunit of the microsomal triacylglycerol transfer protein MTTP in mammalian cells. Stabilizes both enzymes and retain them in the ER without contributing to the catalytic activity. Binds UBQLN1. Interacts with ERO1B. Interacts with ILDR2. Interacts with ERN1/IRE1A (via N-terminus); the interaction is enhanced by phosphorylation of P4HB by FAM20C in response to endoplasmic reticulum stress and results in attenuation of ERN1 activity. Phosphorylation of Ser-358 by FAM20C is induced by endoplasmic reticulum stress and results in a functional switch from oxidoreductase to molecular chaperone. It also promotes interaction with ERN1.

It localises to the endoplasmic reticulum. Its subcellular location is the endoplasmic reticulum lumen. The protein localises to the melanosome. It is found in the cell membrane. It catalyses the reaction Catalyzes the rearrangement of -S-S- bonds in proteins.. In terms of biological role, this multifunctional protein catalyzes the formation, breakage and rearrangement of disulfide bonds. At the cell surface, seems to act as a reductase that cleaves disulfide bonds of proteins attached to the cell. May therefore cause structural modifications of exofacial proteins. Inside the cell, seems to form/rearrange disulfide bonds of nascent proteins. At high concentrations and following phosphorylation by FAM20C, functions as a chaperone that inhibits aggregation of misfolded proteins. At low concentrations, facilitates aggregation (anti-chaperone activity). May be involved with other chaperones in the structural modification of the TG precursor in hormone biogenesis. Also acts as a structural subunit of various enzymes such as prolyl 4-hydroxylase and microsomal triacylglycerol transfer protein MTTP. Receptor for LGALS9; the interaction retains P4HB at the cell surface of Th2 T helper cells, increasing disulfide reductase activity at the plasma membrane, altering the plasma membrane redox state and enhancing cell migration. This is Protein disulfide-isomerase (P4HB) from Oryctolagus cuniculus (Rabbit).